The following is a 299-amino-acid chain: AT-hook motif nuclear-localized protein 25 (299 aa).

2 disordered regions span residues 1-87 (MSSY…RDSP) and 216-251 (EEETPPPRTTGVQQQQPEASQSSEVTGSGAQACESN). 2 stretches are compositionally biased toward basic and acidic residues: residues 14–23 (HLQRPEDSRT) and 33–42 (NRSEADEAKA). 2 stretches are compositionally biased toward low complexity: residues 44–72 (TTPTGGATSSATASGSSSGRRPRGRPAGS) and 224–239 (TTGVQQQQPEASQSSE). Positions 63-75 (RRPRGRPAGSKNK) form a DNA-binding region, a.T hook. The region spanning 87–233 (PNVLRSHVLE…TTGVQQQQPE (147 aa)) is the PPC domain. A compositionally biased stretch (polar residues) spans 240–251 (VTGSGAQACESN).

As to quaternary structure, homodimer. Interacts with AHL27 and AHL29. In terms of tissue distribution, expressed in seedlings, leaves, stems, floral tips and flowers.

The protein localises to the nucleus. Its function is as follows. Transcription factor that specifically binds AT-rich DNA sequences related to the nuclear matrix attachment regions (MARs). Binds the DNA sequence GNFEI (GA-negative feedback element I) in the GA3OX1 promoter. Binding to GNFEI sequence is required for GA-negative feedback regulation of GA3OX1. The protein is AT-hook motif nuclear-localized protein 25 of Arabidopsis thaliana (Mouse-ear cress).